The chain runs to 402 residues: Probable tRNA pseudouridine synthase tag-124 (402 aa).

Aspartate 85 acts as the Nucleophile in catalysis. The interval 383–402 (SKKEKMAEKKKNGEESSDKL) is disordered.

This sequence belongs to the tRNA pseudouridine synthase TruA family.

The catalysed reaction is a uridine in tRNA = a pseudouridine in tRNA. Formation of pseudouridine at position 38 and 39 in the anticodon stem and loop of transfer RNAs. In Caenorhabditis elegans, this protein is Probable tRNA pseudouridine synthase tag-124 (tag-124).